The sequence spans 570 residues: Urease subunit alpha (570 aa).

Residues 131–570 (GGFDSHIHFI…LPLAQRYFMF (440 aa)) form the Urease domain. His136, His138, and Lys219 together coordinate Ni(2+). The residue at position 219 (Lys219) is an N6-carboxylysine. His221 serves as a coordination point for substrate. Ni(2+)-binding residues include His248 and His274. His322 acts as the Proton donor in catalysis. Asp362 contributes to the Ni(2+) binding site.

It belongs to the metallo-dependent hydrolases superfamily. Urease alpha subunit family. As to quaternary structure, heterotrimer of UreA (gamma), UreB (beta) and UreC (alpha) subunits. Three heterotrimers associate to form the active enzyme. Requires Ni cation as cofactor. In terms of processing, carboxylation allows a single lysine to coordinate two nickel ions.

It is found in the cytoplasm. It catalyses the reaction urea + 2 H2O + H(+) = hydrogencarbonate + 2 NH4(+). It participates in nitrogen metabolism; urea degradation; CO(2) and NH(3) from urea (urease route): step 1/1. This is Urease subunit alpha from Rhodopseudomonas palustris (strain ATCC BAA-98 / CGA009).